The primary structure comprises 531 residues: MISIFKILSSPKPATTTTNIINPINIINGIRYFSSNQEDYPLFKKPVFNGKVLRGGRKVFKNDLIYSKKESHYNNNNNSNNNSNNNNNNNNSNNRNNNNFSNNRNNNNNRNNNNNNSNRNNNNSNDNNFRNNNNNNRRTEYYKNDFDSSKYISNKPEIRIFDLHEQAVYGINPVWVALSSGNRTFNALYVCGTLLPKLKELGIDIKNIENSKREYISDFDHNYGRETNQIEDENQDEQYSNQHDEQEQNEYEEEQEEEKVQEEEEDNNNNNNIKKTTFNRYNDRKNLVALKEIVKNSFKLKIPVRSVNKGTLDSFSKGRPHQGIILDASPLTLLNIDFLEKFDINERVNKRMNGGGGGGGGGGGNKINNDKYPLWLVLDELWDPQNVGAIIRNCSFFNIDGVVISNKNSSPITPAASKSSSGACESFVINRTESIEGFLKSSQRNGWNVVGTSLDDLNENQPCLDINQIKLDQPTILILGNEGFGLKPSVLEICNKTIKIVGGNYKIDSLNVSVTSGILIHTLLSSGTLPK.

Residues 1-40 (MISIFKILSSPKPATTTTNIINPINIINGIRYFSSNQEDY) constitute a mitochondrion transit peptide. 2 disordered regions span residues 70-141 (ESHY…RTEY) and 230-277 (IEDE…KKTT). The segment covering 74–136 (NNNNNSNNNS…NNFRNNNNNN (63 aa)) has biased composition (low complexity). The span at 247 to 267 (EQNEYEEEQEEEKVQEEEEDN) shows a compositional bias: acidic residues.

It belongs to the class IV-like SAM-binding methyltransferase superfamily. RNA methyltransferase TrmH family.

Its subcellular location is the mitochondrion. It catalyses the reaction a uridine in rRNA + S-adenosyl-L-methionine = a 2'-O-methyluridine in rRNA + S-adenosyl-L-homocysteine + H(+). In terms of biological role, S-adenosyl-L-methionine-dependent 2'-O-ribose methyltransferase that catalyzes the formation of a 2'-O-methylguanosine in the mitochondrial large subunit ribosomal RNA (mtLSU rRNA), a universally conserved modification in the peptidyl transferase domain of the mtLSU rRNA. This Dictyostelium discoideum (Social amoeba) protein is rRNA methyltransferase 1, mitochondrial (mrm1).